The chain runs to 272 residues: Orotidine 5'-phosphate decarboxylase (272 aa).

Catalysis depends on lysine 95, which acts as the Proton donor.

This sequence belongs to the OMP decarboxylase family. Type 2 subfamily.

The enzyme catalyses orotidine 5'-phosphate + H(+) = UMP + CO2. It functions in the pathway pyrimidine metabolism; UMP biosynthesis via de novo pathway; UMP from orotate: step 2/2. In Bordetella petrii (strain ATCC BAA-461 / DSM 12804 / CCUG 43448), this protein is Orotidine 5'-phosphate decarboxylase.